The following is a 267-amino-acid chain: Putative carbamate hydrolase RutD (267 aa).

Residues 23–139 (VVLLSSGLGG…IQRCFDTRIH (117 aa)) enclose the AB hydrolase-1 domain.

This sequence belongs to the AB hydrolase superfamily. Hydrolase RutD family.

It carries out the reaction carbamate + 2 H(+) = NH4(+) + CO2. Involved in pyrimidine catabolism. May facilitate the hydrolysis of carbamate, a reaction that can also occur spontaneously. This Caulobacter segnis (strain ATCC 21756 / DSM 7131 / JCM 7823 / NBRC 15250 / LMG 17158 / TK0059) (Mycoplana segnis) protein is Putative carbamate hydrolase RutD.